The chain runs to 256 residues: (R)-S-adenosyl-L-methionine hydrolase (256 aa).

Adenosine contacts are provided by Asp7, His41, Asp68, and Asn183. (R)-S-adenosyl-L-methionine-binding residues include Asn183, Tyr212, Ser226, Glu231, Val234, and Met236. Val234 serves as a coordination point for adenosine.

The protein belongs to the SAM hydrolase / SAM-dependent halogenase family. As to quaternary structure, homotrimer.

The catalysed reaction is (R)-S-adenosyl-L-methionine + H2O = adenosine + L-methionine + H(+). Catalyzes the hydrolysis of S-adenosyl-L-methionine (SAM) into adenosine and L-methionine. Is likely stereoselective, specifically hydrolyzing (R)-S-adenosyl-L-methionine ((R)-SAM), the inactive form of the ubiquitous cofactor SAM, and not the active form of SAM, (S)-S-adenosyl-L-methionine. Probaly plays a role in preventing accumulation of (R)-S-adenosyl-L-methionine in cells; maintenance of (S)-S-denosyl-L-methionine homochirality is important for cellular health given that the (R)-form is largely inactive as a methyl donor and can function as an inhibitor of methyltransferases. Is unable to mediate a fluorination or chlorination reaction with SAM. This Pyrococcus horikoshii (strain ATCC 700860 / DSM 12428 / JCM 9974 / NBRC 100139 / OT-3) protein is (R)-S-adenosyl-L-methionine hydrolase.